The primary structure comprises 195 residues: 2-hydroxychromene-2-carboxylate isomerase (195 aa).

Catalysis depends on serine 13, which acts as the Nucleophile. Residue serine 13 coordinates glutathione. Substrate-binding positions include lysine 45 and 55 to 56; that span reads NR. 181–184 provides a ligand contact to glutathione; that stretch reads WGND.

Belongs to the GST superfamily. NadH family. The cofactor is glutathione.

It carries out the reaction 2-hydroxychromene-2-carboxylate = (3E)-4-(2-hydroxyphenyl)-2-oxobut-3-enoate. With respect to regulation, activated by salicylate. In terms of biological role, involved in the naphthalene and naphthalenesulfonate catabolic pathway. Catalyzes the reversible glutathione-dependent isomerization of 2-hydroxychromene-2-carboxylate (HCCA) to trans-O-hydroxybenzylidenepyruvate (THBPA). It can also use 2-hydroxybenzo[g]chromene-2-carboxylate as substrate. The polypeptide is 2-hydroxychromene-2-carboxylate isomerase (nsaD) (Sphingobium xenophagum).